The following is a 150-amino-acid chain: Large ribosomal subunit protein uL15 (150 aa).

Residues 1–55 (MADNEILQMHDLKPAPGAKKDRTRVGRGEGSKGKTAGRGAKGQTKRNHVRPGFEG) form a disordered region. The segment covering 8–32 (QMHDLKPAPGAKKDRTRVGRGEGSK) has biased composition (basic and acidic residues).

The protein belongs to the universal ribosomal protein uL15 family. Part of the 50S ribosomal subunit.

Functionally, binds to the 23S rRNA. The protein is Large ribosomal subunit protein uL15 of Bifidobacterium longum (strain DJO10A).